The chain runs to 716 residues: Polyribonucleotide nucleotidyltransferase (716 aa).

Positions 493 and 499 each coordinate Mg(2+). Residues 560–619 (PRMITIKINPEKIRDVIGKGGSVIRALTEETGTTIDISDDGVVTIASTSSEGMAEAKKRI) enclose the KH domain. Residues 629 to 697 (GQVYEGTVLK…EKGRVRLSAK (69 aa)) form the S1 motif domain.

Belongs to the polyribonucleotide nucleotidyltransferase family. Mg(2+) serves as cofactor.

It is found in the cytoplasm. The catalysed reaction is RNA(n+1) + phosphate = RNA(n) + a ribonucleoside 5'-diphosphate. In terms of biological role, involved in mRNA degradation. Catalyzes the phosphorolysis of single-stranded polyribonucleotides processively in the 3'- to 5'-direction. The sequence is that of Polyribonucleotide nucleotidyltransferase from Paraburkholderia xenovorans (strain LB400).